A 244-amino-acid chain; its full sequence is tRNA pseudouridine synthase A 2 (244 aa).

Residue Asp-52 is the Nucleophile of the active site. Residue Tyr-110 coordinates substrate.

It belongs to the tRNA pseudouridine synthase TruA family. Homodimer.

The enzyme catalyses uridine(38/39/40) in tRNA = pseudouridine(38/39/40) in tRNA. In terms of biological role, formation of pseudouridine at positions 38, 39 and 40 in the anticodon stem and loop of transfer RNAs. In Clostridium perfringens (strain 13 / Type A), this protein is tRNA pseudouridine synthase A 2.